The sequence spans 109 residues: Archaeosine synthase (109 aa).

The active-site Thioimide intermediate is the Cys-21. Asp-28 acts as the Proton donor/acceptor in catalysis. Residues Asp-28, 43–46 (LAIE), and 62–63 (HE) contribute to the substrate site.

This sequence belongs to the archaeosine synthase type 2 family. In terms of assembly, forms a symmetric tunnel-fold (T-fold) homodecamer of two head-to-head facing pentameric subunits, with 10 active sites at the intermonomer interfaces.

The catalysed reaction is 7-cyano-7-carbaguanosine(15) in tRNA + NH4(+) = archaeosine(15) in tRNA. It participates in tRNA modification; archaeosine-tRNA biosynthesis. Is responsible for the final step in the biosynthesis of archaeosine, a modified nucleoside present in the dihydrouridine loop (D-loop) of archaeal tRNA. Catalyzes the conversion of 7-cyano-7-deazaguanine (preQ0)-modified tRNA to archaeosine-tRNA, transforming a nitrile group to a formamidine group. Can use neither glutamine nor asparagine as amino donor in vitro, is only able to utilize free ammonium. However, the enzyme might function in vivo with a partner that serves to generate ammonium. This chain is Archaeosine synthase, found in Pyrobaculum calidifontis (strain DSM 21063 / JCM 11548 / VA1).